The chain runs to 1073 residues: uncharacterized protein (1073 aa).

A signal peptide spans 1-36 (MAEIIHHSNVFTWAFHVSEYDGAPLLLLGSFSSVAS). Asparagine 132 carries an N-linked (GlcNAc...) asparagine glycan. 392-399 (ATAGIGKS) is an ATP binding site. N-linked (GlcNAc...) asparagine glycosylation is found at asparagine 544, asparagine 632, asparagine 703, asparagine 732, and asparagine 953.

This is an uncharacterized protein from Schizosaccharomyces pombe (strain 972 / ATCC 24843) (Fission yeast).